The chain runs to 291 residues: Elongation factor Ts (291 aa).

The tract at residues 80–83 is involved in Mg(2+) ion dislocation from EF-Tu; it reads TDFV.

This sequence belongs to the EF-Ts family.

Its subcellular location is the cytoplasm. Associates with the EF-Tu.GDP complex and induces the exchange of GDP to GTP. It remains bound to the aminoacyl-tRNA.EF-Tu.GTP complex up to the GTP hydrolysis stage on the ribosome. The chain is Elongation factor Ts from Acinetobacter baumannii (strain AB307-0294).